We begin with the raw amino-acid sequence, 264 residues long: 3-methyl-2-oxobutanoate hydroxymethyltransferase (264 aa).

Mg(2+)-binding residues include aspartate 45 and aspartate 84. 3-methyl-2-oxobutanoate contacts are provided by residues 45-46 (DS), aspartate 84, and lysine 112. Glutamate 114 is a binding site for Mg(2+). The active-site Proton acceptor is glutamate 181.

The protein belongs to the PanB family. Homodecamer; pentamer of dimers. The cofactor is Mg(2+).

It is found in the cytoplasm. The catalysed reaction is 3-methyl-2-oxobutanoate + (6R)-5,10-methylene-5,6,7,8-tetrahydrofolate + H2O = 2-dehydropantoate + (6S)-5,6,7,8-tetrahydrofolate. The protein operates within cofactor biosynthesis; (R)-pantothenate biosynthesis; (R)-pantoate from 3-methyl-2-oxobutanoate: step 1/2. In terms of biological role, catalyzes the reversible reaction in which hydroxymethyl group from 5,10-methylenetetrahydrofolate is transferred onto alpha-ketoisovalerate to form ketopantoate. The protein is 3-methyl-2-oxobutanoate hydroxymethyltransferase of Shewanella pealeana (strain ATCC 700345 / ANG-SQ1).